The following is a 170-amino-acid chain: Allophycocyanin subunit beta-18 (170 aa).

Asparagine 74 carries the post-translational modification N4-methylasparagine. Cysteine 84 serves as a coordination point for (2R,3E)-phycocyanobilin.

Belongs to the phycobiliprotein family. In terms of assembly, heterodimer of an alpha and a beta chain. In terms of processing, contains one covalently linked bilin chromophore.

The protein localises to the plastid. It localises to the chloroplast thylakoid membrane. Light-harvesting photosynthetic bile pigment-protein from the phycobiliprotein complex. Allophycocyanin has a maximum absorption at approximately 650 nanometers. The polypeptide is Allophycocyanin subunit beta-18 (apcF) (Cyanidium caldarium (Red alga)).